Consider the following 622-residue polypeptide: MEGPGLGSQCRNHSHGPHPPGFGRYGICAHENKELANAREALPLIEDSSNCDIVKATQYGIFERCKELVEAGYDVRQPDKENVSLLHWAAINNRLDLVKFYISKGAVVDQLGGDLNSTPLHWAIRQGHLPMVILLLQHGADPTLIDGEGFSSIHLAVLFQHMPIIAYLISKGQSVNMTDVNGQTPLMLSAHKVIGPEPTGFLLKFNPSLNVVDKIHQNTPLHWAVAAGNVNAVDKLLEAGSSLDIQNVKGETPLDMALQNKNQLIIHMLKTEAKMRANQKFRLWRWLQKCELFLLLMLSVITMWAVGYILDFNSDSWLLKGCLLVTLFFLTSLFPRFLVGYKNLVYLPTAFLLSSVFWIFMTWFILFFPDLAGAPFYFSFIFSIVAFLYFFYKTWATDPGFTKASEEEKKVNIITLAETGSLDFRTFCTSCLIRKPLRSLHCHVCNSCVARYDQHCLWTGRCIGFGNHHYYIFFLFFLSMVCGWIIYGSFIYWSSHCATTFKEDGLWTYLNQIVACSPWVLYILMLATFHFSWSTFLLLNQLFQIAFLGLTSHERISLQKQSKHMKQTLSLRKTPYNLGFMQNLADFFQCGCFGLVKPCVVDWTSQYTVVFHPAREKVLRSV.

At Met1 the chain carries N-acetylmethionine. At 1-291 the chain is on the cytoplasmic side; it reads MEGPGLGSQC…RLWRWLQKCE (291 aa). ANK repeat units follow at residues 43–78, 81–110, 115–144, 148–177, 181–211, 216–245, and 249–277; these read PLIE…VRQP, ENVS…VVDQ, LNST…DPTL, EGFS…SVNM, NGQT…SLNV, HQNT…SLDI, and KGET…KMRA. Residues 292 to 312 traverse the membrane as a helical segment; the sequence is LFLLLMLSVITMWAVGYILDF. Over 313-320 the chain is Lumenal; it reads NSDSWLLK. The helical transmembrane segment at 321–341 threads the bilayer; that stretch reads GCLLVTLFFLTSLFPRFLVGY. The Cytoplasmic segment spans residues 342 to 347; sequence KNLVYL. A helical transmembrane segment spans residues 348–368; sequence PTAFLLSSVFWIFMTWFILFF. Residues 369–370 are Lumenal-facing; that stretch reads PD. Residues 371–391 traverse the membrane as a helical segment; the sequence is LAGAPFYFSFIFSIVAFLYFF. At 392 to 470 the chain is on the cytoplasmic side; that stretch reads YKTWATDPGF…RCIGFGNHHY (79 aa). The DHHC domain occupies 426–476; the sequence is TFCTSCLIRKPLRSLHCHVCNSCVARYDQHCLWTGRCIGFGNHHYYIFFLF. The active-site S-palmitoyl cysteine intermediate is Cys456. A helical membrane pass occupies residues 471–491; the sequence is YIFFLFFLSMVCGWIIYGSFI. At 492-518 the chain is on the lumenal side; the sequence is YWSSHCATTFKEDGLWTYLNQIVACSP. The helical transmembrane segment at 519–539 threads the bilayer; that stretch reads WVLYILMLATFHFSWSTFLLL. Residues 540–622 are Cytoplasmic-facing; sequence NQLFQIAFLG…PAREKVLRSV (83 aa).

Belongs to the DHHC palmitoyltransferase family. AKR/ZDHHC17 subfamily. In terms of assembly, interacts (via ANK repeats) with CLIP3. Interacts (via ANK repeats) with DNAJC5 (via C-terminus). Interacts (via ANK repeats) with HTT. Interacts (via ANK repeats) with MAP6. Interacts (via ANK repeats) with SNAP23. Interacts (via ANK repeats) with SNAP25. May interact (via ANK repeats) with SPRED2.

The protein localises to the golgi apparatus membrane. The protein resides in the cytoplasmic vesicle membrane. It catalyses the reaction L-cysteinyl-[protein] + hexadecanoyl-CoA = S-hexadecanoyl-L-cysteinyl-[protein] + CoA. Palmitoyltransferase that could catalyze the addition of palmitate onto various protein substrates. Palmitoyltransferase for HTT and GAD2. May play a role in Mg(2+) transport. The sequence is that of Palmitoyltransferase ZDHHC13 from Pongo abelii (Sumatran orangutan).